The primary structure comprises 106 residues: Small ribosomal subunit protein uS10 (106 aa).

The protein belongs to the universal ribosomal protein uS10 family. As to quaternary structure, part of the 30S ribosomal subunit.

Functionally, involved in the binding of tRNA to the ribosomes. The polypeptide is Small ribosomal subunit protein uS10 (Parasynechococcus marenigrum (strain WH8102)).